The primary structure comprises 257 residues: MFKVRVIPCLDVKDGRVVKGVNFVGLRDAGDPVEAAIAYGAAGADELCFLDITATHENRGTILDVVKRTAEACFMPVTVGGGVRTVDDIRTLLNHGADKVSINSAAVSRREFVKEAAEKFGNQCIVVAIDAKRVARSGSDRWEIFTHGGRKETGIDAIEYAQEVVALGAGEILLTSMDRDGTKQGFDIPLTRAIADSITVPVIASGGVGNLDHLVAGIREGHATAVLAASIFHFGEFTVRQAKEHMARAGLPMRLDP.

Residues Asp-11 and Asp-130 contribute to the active site.

It belongs to the HisA/HisF family. Heterodimer of HisH and HisF.

The protein localises to the cytoplasm. It carries out the reaction 5-[(5-phospho-1-deoxy-D-ribulos-1-ylimino)methylamino]-1-(5-phospho-beta-D-ribosyl)imidazole-4-carboxamide + L-glutamine = D-erythro-1-(imidazol-4-yl)glycerol 3-phosphate + 5-amino-1-(5-phospho-beta-D-ribosyl)imidazole-4-carboxamide + L-glutamate + H(+). Its pathway is amino-acid biosynthesis; L-histidine biosynthesis; L-histidine from 5-phospho-alpha-D-ribose 1-diphosphate: step 5/9. IGPS catalyzes the conversion of PRFAR and glutamine to IGP, AICAR and glutamate. The HisF subunit catalyzes the cyclization activity that produces IGP and AICAR from PRFAR using the ammonia provided by the HisH subunit. The polypeptide is Imidazole glycerol phosphate synthase subunit HisF (Afipia carboxidovorans (strain ATCC 49405 / DSM 1227 / KCTC 32145 / OM5) (Oligotropha carboxidovorans)).